The following is a 161-amino-acid chain: Heme transporter hrg-6 (161 aa).

4 helical membrane passes run 13–33 (IAYT…YIFA), 38–58 (VALA…YFYL), 75–95 (VLFW…ITAI), and 115–135 (WWST…NAFI).

This sequence belongs to the HRG family.

The protein resides in the membrane. Heme transporter. This is Heme transporter hrg-6 (hrg-6) from Caenorhabditis elegans.